Here is a 169-residue protein sequence, read N- to C-terminus: Nucleoside diphosphate kinase 3 (169 aa).

ADP-binding residues include Lys-29, Arg-105, Thr-111, Arg-122, Val-129, and Asn-132. His-135 serves as the catalytic Pros-phosphohistidine intermediate.

The protein belongs to the NDK family. In terms of assembly, homohexamer. Interacts (via its N-terminal region) with KAT5; this interaction enables recruitment of NME3 at DNA damage sites where it plays a role in the repair of DNA. Found in association with several ciliary nephronophthisis proteins, including NEK8, CEP164, ANKS6. Requires Mg(2+) as cofactor.

The protein resides in the mitochondrion outer membrane. Its subcellular location is the cytoplasm. It is found in the cytoskeleton. It localises to the cilium basal body. It catalyses the reaction a 2'-deoxyribonucleoside 5'-diphosphate + ATP = a 2'-deoxyribonucleoside 5'-triphosphate + ADP. The catalysed reaction is a ribonucleoside 5'-diphosphate + ATP = a ribonucleoside 5'-triphosphate + ADP. Catalyzes the phosphorylation of ribonucleosides and deoxyribonucleoside diphosphates, other than ATP, into the corresponding triphosphates with ATP as the major phosphate donor. The ATP gamma phosphate is transferred to the nucleoside diphosphate beta phosphate via a ping-pong mechanism, using a phosphorylated active-site intermediate. Through the catalyzed exchange of gamma-phosphate between di- and triphosphonucleosides participates in regulation of intracellular nucleotide homeostasis. Inhibits granulocyte differentiation. May be required for ciliary function during renal development. In terms of biological role, independently of its kinase activity, facilitates mitochondrial tethering prior to membrane fusion through its direct membrane-binding and hexamerization. Implicated in repair of both single- and double-stranded breaks in DNA through its association with the ribonucleotide reductase complex (RNR complex) via its interaction with the histone acetyltransferase KAT5, this interaction enables recruitment of NME3 at DNA damage sites where it plays a role in the repair of DNA, independently of its kinase activity. The protein is Nucleoside diphosphate kinase 3 (Nme3) of Mus musculus (Mouse).